Reading from the N-terminus, the 330-residue chain is RNA/RNP complex-1-interacting phosphatase (330 aa).

Residues 1–12 (MSQWHHPRSGWG) are compositionally biased toward basic residues. A disordered region spans residues 1–32 (MSQWHHPRSGWGRRRDFSGRSSAKKKGGNHIP). A Tyrosine-protein phosphatase domain is found at 61–208 (FEKKLAPEEC…LQNGPIRKNW (148 aa)). The active-site Phosphocysteine intermediate is C152. 153–158 (THGLNR) lines the substrate pocket. Residue R158 is the Proton donor/acceptor of the active site.

The protein belongs to the protein-tyrosine phosphatase family. Non-receptor class dual specificity subfamily. As to quaternary structure, monomer. May interact with SFRS7 and SFRS9/SRP30C.

It localises to the nucleus. The protein localises to the nucleus speckle. Functionally, possesses RNA 5'-triphosphatase and diphosphatase activities, but displays a poor protein-tyrosine phosphatase activity. In addition, has phosphatase activity with ATP, ADP and O-methylfluorescein phosphate (in vitro). Binds to RNA. May participate in nuclear mRNA metabolism. This chain is RNA/RNP complex-1-interacting phosphatase, found in Homo sapiens (Human).